A 334-amino-acid polypeptide reads, in one-letter code: MSVAPHIPVMMSEVLHALEPRSGALYIDGTFGAGGYSRGILSAADCKLIGIDRDPAVQPTATQLVQASGGRFAFAEAPFSAMGEVLASRGIDQVDGIVLDIGVSSMQIDQAERGFSFMRKGPLDMRMAASGPTAADAVNRLKEAELADIFYVYGEERRSRRIAKFICTARAEAKIETTDRLAEIVTRATGGKHSKIHPATKVFQALRIFVNDELGELARALEASERLLAPLGRLVVVTFHSLEDRMVKTFLRSRAGLAGGGGSRYEPAVEAGPAPSFSLLTRRAVSASDEEAAENPRARSAKLRAAIRNEAPAWSDSPSLHTSIVPLARLEAAL.

S-adenosyl-L-methionine contacts are provided by residues 34 to 36, Asp52, Ala87, Asp100, and Gln107; that span reads GGY.

Belongs to the methyltransferase superfamily. RsmH family.

The protein localises to the cytoplasm. The enzyme catalyses cytidine(1402) in 16S rRNA + S-adenosyl-L-methionine = N(4)-methylcytidine(1402) in 16S rRNA + S-adenosyl-L-homocysteine + H(+). Functionally, specifically methylates the N4 position of cytidine in position 1402 (C1402) of 16S rRNA. This chain is Ribosomal RNA small subunit methyltransferase H, found in Maricaulis maris (strain MCS10) (Caulobacter maris).